Reading from the N-terminus, the 100-residue chain is Urease subunit gamma (100 aa).

This sequence belongs to the urease gamma subunit family. In terms of assembly, heterotrimer of UreA (gamma), UreB (beta) and UreC (alpha) subunits. Three heterotrimers associate to form the active enzyme.

The protein resides in the cytoplasm. It carries out the reaction urea + 2 H2O + H(+) = hydrogencarbonate + 2 NH4(+). Its pathway is nitrogen metabolism; urea degradation; CO(2) and NH(3) from urea (urease route): step 1/1. The polypeptide is Urease subunit gamma (Acetivibrio thermocellus (strain ATCC 27405 / DSM 1237 / JCM 9322 / NBRC 103400 / NCIMB 10682 / NRRL B-4536 / VPI 7372) (Clostridium thermocellum)).